The sequence spans 279 residues: Armadillo repeat-containing protein 1 (279 aa).

One copy of the ARM repeat lies at 36-78 (GCLPGLILFLDHPSPPVVHSALLALRYLAECRANREKMKGELG). Positions 236–257 (EYLPEDESPSKEQDKAVSRVGS) are disordered. Positions 243-252 (SPSKEQDKAV) are enriched in basic and acidic residues.

In terms of assembly, interacts with mitochondrial contact site and cristae organizing system (MICOS) complex components IMMT/MIC60 and MICOS10/MIC10. Interacts with mitochondrial outer membrane sorting assembly machinery (SAM) complex components SAMM50 and MTX1.

It localises to the cytoplasm. Its subcellular location is the mitochondrion. The protein resides in the mitochondrion outer membrane. Its function is as follows. In association with mitochondrial contact site and cristae organizing system (MICOS) complex components and mitochondrial outer membrane sorting assembly machinery (SAM) complex components may regulate mitochondrial dynamics playing a role in determining mitochondrial length, distribution and motility. The protein is Armadillo repeat-containing protein 1 (ARMC1) of Gallus gallus (Chicken).